The sequence spans 334 residues: Protein-methionine-sulfoxide reductase catalytic subunit MsrP (334 aa).

Positions 1-44 (MKKIRKLTEADVTAESAFFMQRRQVLKALGISAAALSLPNAAHA) form a signal peptide, tat-type signal. Mo-molybdopterin-binding positions include asparagine 88, 91 to 92 (YE), cysteine 146, threonine 181, asparagine 233, arginine 238, and 249 to 251 (GIK).

The protein belongs to the MsrP family. As to quaternary structure, heterodimer of a catalytic subunit (MsrP) and a heme-binding subunit (MsrQ). The cofactor is Mo-molybdopterin. Predicted to be exported by the Tat system. The position of the signal peptide cleavage has not been experimentally proven.

The protein localises to the periplasm. It catalyses the reaction L-methionyl-[protein] + a quinone + H2O = L-methionyl-(S)-S-oxide-[protein] + a quinol. It carries out the reaction L-methionyl-[protein] + a quinone + H2O = L-methionyl-(R)-S-oxide-[protein] + a quinol. Its function is as follows. Part of the MsrPQ system that repairs oxidized periplasmic proteins containing methionine sulfoxide residues (Met-O), using respiratory chain electrons. Thus protects these proteins from oxidative-stress damage caused by reactive species of oxygen and chlorine generated by the host defense mechanisms. MsrPQ is essential for the maintenance of envelope integrity under bleach stress, rescuing a wide series of structurally unrelated periplasmic proteins from methionine oxidation, including the primary periplasmic chaperone SurA and the lipoprotein Pal. The catalytic subunit MsrP is non-stereospecific, being able to reduce both (R-) and (S-) diastereoisomers of methionine sulfoxide. This chain is Protein-methionine-sulfoxide reductase catalytic subunit MsrP, found in Escherichia fergusonii (strain ATCC 35469 / DSM 13698 / CCUG 18766 / IAM 14443 / JCM 21226 / LMG 7866 / NBRC 102419 / NCTC 12128 / CDC 0568-73).